We begin with the raw amino-acid sequence, 766 residues long: Pumilio domain-containing protein 12 (766 aa).

Disordered stretches follow at residues Lys63–Lys98 and Ala152–Ser197. Polar residues predominate over residues Ser79–Ser88. Positions Pro179–Gly193 are enriched in acidic residues. A PUM-HD domain is found at Ala245–Tyr602. Pumilio repeat units lie at residues Glu313–Asn348, Ser461–Lys496, Asn497–Ser534, and Glu535–Thr571.

The sequence is that of Pumilio domain-containing protein 12 (puf-12) from Caenorhabditis elegans.